The chain runs to 849 residues: SMY2 homolog 2 (849 aa).

One can recognise a GYF domain in the interval 149–205 (ESQWKYIDSNGNIQGPFGTNNMSQWYQGGYFTPTLQICRLATSPEPFGVNDRFIRLG). 4 disordered regions span residues 305 to 505 (APLS…TTNL), 527 to 547 (DLKK…QLDR), 593 to 612 (TKIN…IKPD), and 634 to 661 (NRAS…NTSN). The span at 308–318 (STTSSRSNKTT) shows a compositional bias: low complexity. Positions 319–331 (SSHEEKVPSHEEA) are enriched in basic and acidic residues. Thr-350 is modified (phosphothreonine). 3 stretches are compositionally biased toward basic and acidic residues: residues 361 to 375 (TKQE…KEQN), 387 to 403 (VDRK…KSKD), and 425 to 443 (LLEE…EEQR). The stretch at 410–484 (EEQKRFAKAE…EKQKELLNNI (75 aa)) forms a coiled coil. A compositionally biased stretch (basic residues) spans 444 to 455 (KLKKEKKLKQKQ). The segment covering 456–479 (KKEEEKLKKKKKEEGKLEKEKQKE) has biased composition (basic and acidic residues). The segment covering 483–505 (NILTGDTETPSSENTATSITTNL) has biased composition (polar residues). A compositionally biased stretch (polar residues) spans 594–605 (KINSQSKINKAN). Low complexity predominate over residues 644–661 (SRTPSPSSSALNSSNTSN).

Belongs to the SMY2/mpd2 family. As to quaternary structure, interacts with ribosomes. Interacts with EAP1 and MSL5 (via the GYP domain).

It is found in the cytoplasm. This chain is SMY2 homolog 2 (SYH1), found in Saccharomyces cerevisiae (strain ATCC 204508 / S288c) (Baker's yeast).